We begin with the raw amino-acid sequence, 294 residues long: tRNA dimethylallyltransferase (294 aa).

Residue 10–17 (GPTAVGKT) participates in ATP binding. 12 to 17 (TAVGKT) lines the substrate pocket. The segment at 35-38 (DSQQ) is interaction with substrate tRNA.

This sequence belongs to the IPP transferase family. As to quaternary structure, monomer. Requires Mg(2+) as cofactor.

It catalyses the reaction adenosine(37) in tRNA + dimethylallyl diphosphate = N(6)-dimethylallyladenosine(37) in tRNA + diphosphate. Catalyzes the transfer of a dimethylallyl group onto the adenine at position 37 in tRNAs that read codons beginning with uridine, leading to the formation of N6-(dimethylallyl)adenosine (i(6)A). The polypeptide is tRNA dimethylallyltransferase (Streptococcus suis (strain 05ZYH33)).